Consider the following 310-residue polypeptide: Pseudouridine-5'-phosphate glycosidase (310 aa).

The active-site Proton donor is the Glu-26. Residues Lys-87 and Val-107 each coordinate substrate. Asp-139 contacts Mn(2+). 141 to 143 (SAD) is a substrate binding site. Residue Lys-160 is the Nucleophile of the active site.

This sequence belongs to the pseudouridine-5'-phosphate glycosidase family. Homotrimer. Mn(2+) is required as a cofactor.

It catalyses the reaction D-ribose 5-phosphate + uracil = psi-UMP + H2O. Functionally, catalyzes the reversible cleavage of pseudouridine 5'-phosphate (PsiMP) to ribose 5-phosphate and uracil. Functions biologically in the cleavage direction, as part of a pseudouridine degradation pathway. This chain is Pseudouridine-5'-phosphate glycosidase, found in Roseobacter denitrificans (strain ATCC 33942 / OCh 114) (Erythrobacter sp. (strain OCh 114)).